The following is a 429-amino-acid chain: Adenylosuccinate synthetase (429 aa).

GTP-binding positions include 12–18 (GDEGKGK) and 40–42 (GHT). Aspartate 13 serves as the catalytic Proton acceptor. Residues aspartate 13 and glycine 40 each coordinate Mg(2+). IMP is bound by residues 13–16 (DEGK), 38–41 (NAGH), threonine 129, arginine 143, glutamine 224, threonine 239, and arginine 303. Catalysis depends on histidine 41, which acts as the Proton donor. Residue 299–305 (VTTGRAR) participates in substrate binding. Residues arginine 305, 331 to 333 (KLD), and 413 to 415 (GVG) each bind GTP.

It belongs to the adenylosuccinate synthetase family. In terms of assembly, homodimer. Requires Mg(2+) as cofactor.

It localises to the cytoplasm. It catalyses the reaction IMP + L-aspartate + GTP = N(6)-(1,2-dicarboxyethyl)-AMP + GDP + phosphate + 2 H(+). It participates in purine metabolism; AMP biosynthesis via de novo pathway; AMP from IMP: step 1/2. Its function is as follows. Plays an important role in the de novo pathway of purine nucleotide biosynthesis. Catalyzes the first committed step in the biosynthesis of AMP from IMP. In Rhodococcus erythropolis (strain PR4 / NBRC 100887), this protein is Adenylosuccinate synthetase.